The chain runs to 420 residues: 26S proteasome non-ATPase regulatory subunit 4 (420 aa).

The 174-residue stretch at 1-174 (MSQEATIIAV…TGSHLISVAP (174 aa)) folds into the VWFA domain. 3 consecutive UIM domains span residues 210 to 229 (AEDPDLLYALRVSMEDQRMR), 255 to 274 (SEEAMLQQALAMSMQMNNTE), and 288 to 307 (SEEDQIAYALRMSLQQMGEE). A disordered region spans residues 392 to 420 (RKAINALTKSQSQRGSKKDEKEDEDKQNS). Basic and acidic residues predominate over residues 407–420 (SKKDEKEDEDKQNS).

It belongs to the proteasome subunit S5A family. The 26S proteasome is composed of a core protease, known as the 20S proteasome, capped at one or both ends by the 19S regulatory complex (RC). The RC is composed of at least 18 different subunits in two subcomplexes, the base and the lid, which form the portions proximal and distal to the 20S proteolytic core, respectively.

Binds and presumably selects ubiquitin-conjugates for destruction. In Schistosoma mansoni (Blood fluke), this protein is 26S proteasome non-ATPase regulatory subunit 4.